The primary structure comprises 108 residues: MMTLRDLINKLLGRETSSANTARERLQLVLAHDRVDMSSLTTDLLDKMRKEILDVVAKYVEIDFDEVAVSLETEDRMTALVANLPIKRTISGEIKFKKADKANKDIKK.

The protein belongs to the MinE family.

Its function is as follows. Prevents the cell division inhibition by proteins MinC and MinD at internal division sites while permitting inhibition at polar sites. This ensures cell division at the proper site by restricting the formation of a division septum at the midpoint of the long axis of the cell. The sequence is that of Cell division topological specificity factor from Prochlorococcus marinus (strain AS9601).